The following is a 213-amino-acid chain: Thymidylate kinase (213 aa).

11–18 contacts ATP; that stretch reads GPDGAGKT.

Belongs to the thymidylate kinase family.

It catalyses the reaction dTMP + ATP = dTDP + ADP. Its function is as follows. Phosphorylation of dTMP to form dTDP in both de novo and salvage pathways of dTTP synthesis. The sequence is that of Thymidylate kinase from Oenococcus oeni (strain ATCC BAA-331 / PSU-1).